The sequence spans 312 residues: Aspartate carbamoyltransferase catalytic subunit (312 aa).

Residues R57 and T58 each coordinate carbamoyl phosphate. K85 provides a ligand contact to L-aspartate. Residues R107, H135, and Q138 each coordinate carbamoyl phosphate. L-aspartate-binding residues include R168 and R222. Residues G264 and P265 each contribute to the carbamoyl phosphate site.

It belongs to the aspartate/ornithine carbamoyltransferase superfamily. ATCase family. As to quaternary structure, heterododecamer (2C3:3R2) of six catalytic PyrB chains organized as two trimers (C3), and six regulatory PyrI chains organized as three dimers (R2).

The catalysed reaction is carbamoyl phosphate + L-aspartate = N-carbamoyl-L-aspartate + phosphate + H(+). It functions in the pathway pyrimidine metabolism; UMP biosynthesis via de novo pathway; (S)-dihydroorotate from bicarbonate: step 2/3. Its function is as follows. Catalyzes the condensation of carbamoyl phosphate and aspartate to form carbamoyl aspartate and inorganic phosphate, the committed step in the de novo pyrimidine nucleotide biosynthesis pathway. This is Aspartate carbamoyltransferase catalytic subunit from Carboxydothermus hydrogenoformans (strain ATCC BAA-161 / DSM 6008 / Z-2901).